A 114-amino-acid polypeptide reads, in one-letter code: Pro-FMRFamide-related neuropeptide FF (114 aa).

A signal peptide spans 1 to 21; the sequence is MDSKWAAVLLLLLLLRNWGHA. Residues 22-69 constitute a propeptide that is removed on maturation; the sequence is EEAGSWGEDQVFAEEDKGPHPSQYAHTPDRIQTPGSLMRVLLQAMERP. The disordered stretch occupies residues 29–51; that stretch reads EDQVFAEEDKGPHPSQYAHTPDR. Phenylalanine amide is present on phenylalanine 82. Positions 85–100 are excised as a propeptide; that stretch reads NAWGPWSKEQLSPQAR. At phenylalanine 111 the chain carries Phenylalanine amide.

Belongs to the FARP (FMRFamide related peptide) family.

It localises to the secreted. Functionally, morphine modulating peptides. Have wide-ranging physiologic effects, including the modulation of morphine-induced analgesia, elevation of arterial blood pressure, and increased somatostatin secretion from the pancreas. Neuropeptide FF and SF potentiate and sensitize ASIC2 and ASIC3 channels. The protein is Pro-FMRFamide-related neuropeptide FF (Npff) of Rattus norvegicus (Rat).